A 609-amino-acid chain; its full sequence is Protein KINESIN LIGHT CHAIN-RELATED 1 (609 aa).

The disordered stretch occupies residues 1–77; it reads MPAMPGLVSV…TAAVIDVDDP (77 aa). Positions 38-55 are enriched in low complexity; that stretch reads KKTPSSTPSRSKPSPNRS. 10 TPR repeats span residues 140–173, 183–216, 225–258, 267–301, 307–340, 349–382, 392–425, 433–466, 474–507, and 516–549; these read AMSLHVLAAIYCSLGRFDEAVPPLERAIQVPDPT, FSGHMQLGDTLSMLGQIDRSIACYEEGLKIQIQT, GETCRYLAEAYVQAMQFNKAEELCKKTLEIHRAH, AADRRLMAIICEAKGDYENALEHLVLASMAMIASG, ASIDVSIGNIYMSLCRFDEAVFSYQKALTVFKAS, ASVFVRLAELYHRTGKLRESKSYCENALRIYNKP, AGGLTEISAIYESVDEPEEALKLLQKSMKLLEDK, AGLEARMGVMYYTVGRYEDARNAFESAVTKLRAA, GVVLNQMGLACVQLFKIDEAGELFEEARGILEQE, and LGVYSNLAATYDAMGRIEDAIEILEQVLKLREEK. The disordered stretch occupies residues 582–609; it reads LQNLIDPNARPPKKESSAKKWPSLGFKF.

This sequence belongs to the kinesin light chain family. In terms of assembly, interacts with IQD1.

The protein resides in the cytoplasm. Its subcellular location is the cytoskeleton. The protein is Protein KINESIN LIGHT CHAIN-RELATED 1 of Arabidopsis thaliana (Mouse-ear cress).